Here is a 585-residue protein sequence, read N- to C-terminus: MSFEIPRRQYADLYGPTTGDKIRLADTELFLEIEKDLTVYGEEVVFGGGKVIRDGMGQNGQATRDEDIPDTVITNAVILDHSGIYKADVALRDGHIFRIGKAGNPQITDGVDIVIGASTEIIAGERKILTAGGIDTHIHFISPDQVATALTSGVTTMIGGGTGPAEGTKATTVTPGKWHIHRMLQAAEAFPMNIGLFGKGHASAVEPLAEQIRAGAIGLKVHEDWGSTTSSIDMSLTVADEYDVQVAIHTDTLNECGFVEDTIRAINGRVIHTFHTEGAGGGHAPDIIKIAGMPNVLPASTNPTLPYTRNTIEEHLDMLMVCHHLNPDIPEDVAFADSRIRAETIAAEDVLQDMGIFSITSSDSQAMGRVGEVITRTWQVADKMKKQRGILAADGGMDLGADGSASAHGSAGSDNFRLKRYVAKYTINPALAQGIADTVGSVEEGKFADLVLWDPAFFGVKPELVLKGGQIAYALMGDANASIPTPQPRTMRPMFGAFGKAVQQTSITFLSKAAIDAGVPEELGLEKLIRPVSGIRNLTKADLKYNDATPDIQVDPETYQVTVDGEDVTCEPADVLPMAQRYFLF.

A Urease domain is found at 132–585; that stretch reads GGIDTHIHFI…LPMAQRYFLF (454 aa). Residues histidine 137, histidine 139, and lysine 220 each contribute to the Ni(2+) site. An N6-carboxylysine modification is found at lysine 220. A substrate-binding site is contributed by histidine 222. Residues histidine 249 and histidine 275 each contribute to the Ni(2+) site. The active-site Proton donor is histidine 323. Aspartate 363 provides a ligand contact to Ni(2+).

Belongs to the metallo-dependent hydrolases superfamily. Urease alpha subunit family. Heterotrimer of UreA (gamma), UreB (beta) and UreC (alpha) subunits. Three heterotrimers associate to form the active enzyme. Ni cation is required as a cofactor. Post-translationally, carboxylation allows a single lysine to coordinate two nickel ions.

It is found in the cytoplasm. The enzyme catalyses urea + 2 H2O + H(+) = hydrogencarbonate + 2 NH4(+). It functions in the pathway nitrogen metabolism; urea degradation; CO(2) and NH(3) from urea (urease route): step 1/1. This is Urease subunit alpha from Pseudarthrobacter chlorophenolicus (strain ATCC 700700 / DSM 12829 / CIP 107037 / JCM 12360 / KCTC 9906 / NCIMB 13794 / A6) (Arthrobacter chlorophenolicus).